The chain runs to 122 residues: uncharacterized protein (122 aa).

A signal peptide spans 1 to 35 (MCCYVGKATKIFLCLAAALIVVGLVLGFGLAHRTW). Residues 55-83 (YGGGGGGGDPLPATSGAGDTPPGVPLTEP) form a disordered region.

This is an uncharacterized protein from Oryza sativa subsp. japonica (Rice).